A 162-amino-acid chain; its full sequence is ATP synthase subunit b 1 (162 aa).

Residues 1-21 (MLLTAEFWVAVAFVAFLVIVW) traverse the membrane as a helical segment.

This sequence belongs to the ATPase B chain family. In terms of assembly, F-type ATPases have 2 components, F(1) - the catalytic core - and F(0) - the membrane proton channel. F(1) has five subunits: alpha(3), beta(3), gamma(1), delta(1), epsilon(1). F(0) has three main subunits: a(1), b(2) and c(10-14). The alpha and beta chains form an alternating ring which encloses part of the gamma chain. F(1) is attached to F(0) by a central stalk formed by the gamma and epsilon chains, while a peripheral stalk is formed by the delta and b chains.

The protein resides in the cell inner membrane. Its function is as follows. F(1)F(0) ATP synthase produces ATP from ADP in the presence of a proton or sodium gradient. F-type ATPases consist of two structural domains, F(1) containing the extramembraneous catalytic core and F(0) containing the membrane proton channel, linked together by a central stalk and a peripheral stalk. During catalysis, ATP synthesis in the catalytic domain of F(1) is coupled via a rotary mechanism of the central stalk subunits to proton translocation. In terms of biological role, component of the F(0) channel, it forms part of the peripheral stalk, linking F(1) to F(0). The sequence is that of ATP synthase subunit b 1 from Methylorubrum populi (strain ATCC BAA-705 / NCIMB 13946 / BJ001) (Methylobacterium populi).